The sequence spans 157 residues: Large ribosomal subunit protein eL24 (157 aa).

Positions 95-157 (NQKPEVRKAQ…VSAPRVGGKR (63 aa)) are disordered. The segment covering 96–117 (QKPEVRKAQREQAIRAAKEAKK) has biased composition (basic and acidic residues). The segment covering 123 to 145 (KKQTTQSSKAPAKSAQKQKIAKP) has biased composition (low complexity).

This sequence belongs to the eukaryotic ribosomal protein eL24 family. In terms of assembly, component of the large ribosomal subunit.

It is found in the cytoplasm. In terms of biological role, component of the large ribosomal subunit. The ribosome is a large ribonucleoprotein complex responsible for the synthesis of proteins in the cell. Plays an essential role in early embryonic development. This is Large ribosomal subunit protein eL24 (rpl24) from Danio rerio (Zebrafish).